Consider the following 1118-residue polypeptide: Collagenase ColG (1118 aa).

The N-terminal stretch at Met-1–Ala-45 is a signal peptide. The propeptide occupies Lys-46–Ser-110. Residues Ile-111–Leu-786 are S1 metalloprotease domain, degrades both FALGPA (furylacryloyl-Leu-Gly-Pro-Ala) and type I collagen. Residues Tyr-119–Asp-388 are activator domain required for full activity on collagen. A catalytic subdomain region spans residues Gly-389–Gly-670. Residues Lys-396–Lys-1118 form a degrades soluble FALGPA peptide (furylacryloyl-Leu-Gly-Pro-Ala) but not type I collagen region. Glu-498 serves as a coordination point for Ca(2+). His-523 is a Zn(2+) binding site. Glu-524 is an active-site residue. Position 527 (His-527) interacts with Zn(2+). Positions 531, 535, and 537 each coordinate Ca(2+). Glu-555 provides a ligand contact to Zn(2+). Residues Asp-679–Ala-790 form a helper subdomain region. An S2 domain region spans residues Thr-787 to Asp-882. The Ca(2+) site is built by Asn-795, Lys-796, Asp-823, Asp-825, Asp-864, Glu-890, Glu-892, Asn-894, Asp-913, Asp-918, Ala-920, Asp-921, Glu-1009, Glu-1011, Asn-1013, Asp-1014, Ser-1032, Asp-1037, Arg-1039, and Asp-1040. The region spanning Ala-797–Thr-885 is the PKD domain. An S3a collagen-binding domain region spans residues Pro-886–Gly-1003. The interval Lys-1008–Lys-1118 is S3b collagen-binding domain. Positions Leu-1102–Tyr-1106 are collagen-binding.

Belongs to the peptidase M9B family. Collagenase subfamily. Requires Ca(2+) as cofactor. The cofactor is Zn(2+). Upon purification gives 67 kDa, 78 kDa, 82 kDa and 116 kDa (full-length) proteins all of which have the same N-terminus; only the longest form digests insoluble collagen. At least 2 in vivo isolated forms (C1b and C1c) are missing the second collagen-binding domain, ending on Lys-1006 and Lys-1018 respectively.

It localises to the secreted. It catalyses the reaction Digestion of native collagen in the triple helical region at Xaa-|-Gly bonds. With synthetic peptides, a preference is shown for Gly at P3 and P1', Pro and Ala at P2 and P2', and hydroxyproline, Ala or Arg at P3'.. Inhibited by 1-10-phenanthroline. Inhibited by peptidomimetic isoamyl-phosphonyl-Gly-Pro-Ala, which binds to Zn(2+). Inhibited by broad-spectrum zinc metalloprotease inhibitor batimastat. N-aryl mercaptoacetamide-based inhibitors have been isolated that act on clostridial collagenases with submicromolar affinity while having negligibile activity on human collagenases. Clostridial collagenases are among the most efficient degraders of eukaryotic collagen known; saprophytes use collagen as a carbon source while pathogens additionally digest collagen to aid in host colonization. Has both tripeptidylcarboxypeptidase on Gly-X-Y and endopeptidase activities; the endopeptidase cuts within the triple helix region of collagen while tripeptidylcarboxypeptidase successively digests the exposed ends, thus clostridial collagenases can digest large sections of collagen. Active on soluble type I collagen, insoluble collagen, azocoll, soluble PZ-peptide (all collagenase substrates) and gelatin. The full-length protein has collagenase activity, while the in vivo derived C-terminally truncated shorter versions only act on gelatin. In vitro digestion of soluble calf skin collagen fibrils requires both ColG and ColH; ColG forms missing the second collagen-binding domain are also synergistic with ColH, although their overall efficiency is decreased. The activator domain (residues 119-388) and catalytic subdomain (389-670) open and close around substrate using a Gly-rich hinge (387-397), allowing digestion when the protein is closed. Binding of collagen requires Ca(2+) and is inhibited by EGTA; the collagen-binding domain (CBD, S3a plus S3b) specifically recognizes the triple-helical conformation made by 3 collagen protein chains in the triple-helical region. Isolated CBD (S3a plus S3b) binds collagen fibrils and sheets of many tissues. In Hathewaya histolytica (Clostridium histolyticum), this protein is Collagenase ColG.